We begin with the raw amino-acid sequence, 118 residues long: Large ribosomal subunit protein uL18 (118 aa).

It belongs to the universal ribosomal protein uL18 family. In terms of assembly, part of the 50S ribosomal subunit; part of the 5S rRNA/L5/L18/L25 subcomplex. Contacts the 5S and 23S rRNAs.

Functionally, this is one of the proteins that bind and probably mediate the attachment of the 5S RNA into the large ribosomal subunit, where it forms part of the central protuberance. The polypeptide is Large ribosomal subunit protein uL18 (Rickettsia typhi (strain ATCC VR-144 / Wilmington)).